A 508-amino-acid polypeptide reads, in one-letter code: NAD(P)H-quinone oxidoreductase subunit 2 B, chloroplastic (508 aa).

13 helical membrane-spanning segments follow: residues 24-44 (LLLF…GLIL), 59-79 (WLYF…LFRW), 99-119 (IFQF…VEYI), 124-144 (MAIT…MFLC), 149-169 (FITI…LSGY), 184-204 (LLMG…LYGL), 227-247 (PGIS…LSPA), 295-315 (WHLL…LIAI), 323-343 (MLAY…IVGD), 354-374 (YMLF…LFGL), 395-415 (ALSL…AGFF), 418-438 (LYLF…IGLL), and 482-502 (MIVC…IIAI).

This sequence belongs to the complex I subunit 2 family. As to quaternary structure, NDH is composed of at least 16 different subunits, 5 of which are encoded in the nucleus.

Its subcellular location is the plastid. It is found in the chloroplast thylakoid membrane. It catalyses the reaction a plastoquinone + NADH + (n+1) H(+)(in) = a plastoquinol + NAD(+) + n H(+)(out). It carries out the reaction a plastoquinone + NADPH + (n+1) H(+)(in) = a plastoquinol + NADP(+) + n H(+)(out). Functionally, NDH shuttles electrons from NAD(P)H:plastoquinone, via FMN and iron-sulfur (Fe-S) centers, to quinones in the photosynthetic chain and possibly in a chloroplast respiratory chain. The immediate electron acceptor for the enzyme in this species is believed to be plastoquinone. Couples the redox reaction to proton translocation, and thus conserves the redox energy in a proton gradient. This chain is NAD(P)H-quinone oxidoreductase subunit 2 B, chloroplastic, found in Ipomoea purpurea (Common morning glory).